The following is an 817-amino-acid chain: LisH domain-containing protein ARMC9 (817 aa).

The LisH domain occupies 7-39; sequence HESELLGLVKEYLDFAEFEDTLKTFSKECKVKG. Residues 204 to 230 are a coiled coil; sequence GPNSKELLQQLHQQLVEAERRAMTYLK. A Phosphoserine modification is found at serine 583. Disordered regions lie at residues 637-659 and 761-817; these read RKGPASVQWSGDEPLRRPVTPGG and CKPQ…SIRK. A compositionally biased stretch (polar residues) spans 765-774; it reads VPSTPETVEQ. Residues 793 to 807 are compositionally biased toward low complexity; that stretch reads PQQASRPASTASSTR. The segment covering 808–817 has biased composition (polar residues); sequence GLHSSQSIRK.

As to quaternary structure, interacts with TOGARAM1, CCDC66, CEP104, CSPP1 and CEP290. Interacts with NDUFAF2.

Its subcellular location is the cytoplasm. It is found in the cytoskeleton. The protein resides in the cilium basal body. It localises to the cell projection. The protein localises to the cilium. Its subcellular location is the microtubule organizing center. It is found in the centrosome. The protein resides in the centriole. Functionally, involved in ciliogenesis. It is required for appropriate acetylation and polyglutamylation of ciliary microtubules, and regulation of cilium length. Acts as a positive regulator of hedgehog (Hh) signaling. May participate in the trafficking and/or retention of GLI2 and GLI3 proteins at the ciliary tip. This Mus musculus (Mouse) protein is LisH domain-containing protein ARMC9.